The chain runs to 152 residues: UPF0178 protein Bcer98_3021 (152 aa).

The protein belongs to the UPF0178 family.

In Bacillus cytotoxicus (strain DSM 22905 / CIP 110041 / 391-98 / NVH 391-98), this protein is UPF0178 protein Bcer98_3021.